The sequence spans 241 residues: Thiamine import ATP-binding protein ThiQ (241 aa).

Residues 7–235 (IRLSDVRFSY…AGPEALRHYI (229 aa)) enclose the ABC transporter domain. Position 37–44 (37–44 (GPSGSGKS)) interacts with ATP.

It belongs to the ABC transporter superfamily. Thiamine importer (TC 3.A.1.19.1) family. The complex is composed of two ATP-binding proteins (ThiQ), two transmembrane proteins (ThiP) and a solute-binding protein (ThiB).

It is found in the cell inner membrane. The catalysed reaction is thiamine(out) + ATP + H2O = thiamine(in) + ADP + phosphate + H(+). In terms of biological role, part of the ABC transporter complex ThiBPQ involved in thiamine import. Responsible for energy coupling to the transport system. This is Thiamine import ATP-binding protein ThiQ from Brucella melitensis biotype 1 (strain ATCC 23456 / CCUG 17765 / NCTC 10094 / 16M).